We begin with the raw amino-acid sequence, 937 residues long: Chromatin assembly factor 1 subunit A (937 aa).

Positions Arg21–Met69 are disordered. A compositionally biased stretch (basic and acidic residues) spans Pro31 to Lys43. Polar residues predominate over residues Thr59–Met69. Positions Phe213–Met226 match the PxVxL motif motif. Disordered regions lie at residues Ser250–Lys386, Val574–Gly614, Gly753–Lys778, Ser831–Ser851, and Thr910–Val937. A compositionally biased stretch (low complexity) spans Ser255 to Ser269. The segment covering Ser301–Lys386 has biased composition (basic and acidic residues). Composition is skewed to acidic residues over residues Val574–Gly586 and Gly594–Gly608. The span at Ser756–Gln766 shows a compositional bias: polar residues.

This sequence belongs to the CHAF1A family. Subunit of the CAF-1 complex that contains RBBP4, CHAF1B and CHAF1A. Interacts with CHAF1B, PCNA and RBBP4.

Its subcellular location is the nucleus. Its function is as follows. Acts as a component of the histone chaperone complex chromatin assembly factor 1 (CAF-1), which assembles histone octamers onto DNA during replication and repair. CAF-1 performs the first step of the nucleosome assembly process, bringing newly synthesized histones H3 and H4 to replicating DNA; histones H2A/H2B can bind to this chromatin precursor subsequent to DNA replication to complete the histone octamer. The sequence is that of Chromatin assembly factor 1 subunit A (CHAF1A) from Gallus gallus (Chicken).